Consider the following 101-residue polypeptide: Putative defensin-like protein 307 (101 aa).

Positions Met1–Ala22 are cleaved as a signal peptide. 3 disulfides stabilise this stretch: Cys29/Cys49, Cys35/Cys54, and Cys40/Cys56.

Belongs to the DEFL family.

It is found in the secreted. This is Putative defensin-like protein 307 from Arabidopsis thaliana (Mouse-ear cress).